The chain runs to 646 residues: UvrABC system protein B (646 aa).

A Helicase ATP-binding domain is found at 25–412; sequence NGIKAGMREQ…QNIVEQIIRP (388 aa). 38–45 is a binding site for ATP; the sequence is GVTGSGKT. Residues 91-114 carry the Beta-hairpin motif; sequence YYDFYQPEAYIPQTDTYIDKEASI. The Helicase C-terminal domain maps to 428–594; sequence QVDDLLSEIR…STRRTLREEE (167 aa). Positions 611 to 646 constitute a UVR domain; it reads ELIIKDLEAEMRDAARNLEFERAARIRDRIMSLKSN.

It belongs to the UvrB family. Forms a heterotetramer with UvrA during the search for lesions. Interacts with UvrC in an incision complex.

It localises to the cytoplasm. In terms of biological role, the UvrABC repair system catalyzes the recognition and processing of DNA lesions. A damage recognition complex composed of 2 UvrA and 2 UvrB subunits scans DNA for abnormalities. Upon binding of the UvrA(2)B(2) complex to a putative damaged site, the DNA wraps around one UvrB monomer. DNA wrap is dependent on ATP binding by UvrB and probably causes local melting of the DNA helix, facilitating insertion of UvrB beta-hairpin between the DNA strands. Then UvrB probes one DNA strand for the presence of a lesion. If a lesion is found the UvrA subunits dissociate and the UvrB-DNA preincision complex is formed. This complex is subsequently bound by UvrC and the second UvrB is released. If no lesion is found, the DNA wraps around the other UvrB subunit that will check the other stand for damage. This chain is UvrABC system protein B, found in Methanothermobacter thermautotrophicus (strain ATCC 29096 / DSM 1053 / JCM 10044 / NBRC 100330 / Delta H) (Methanobacterium thermoautotrophicum).